A 161-amino-acid polypeptide reads, in one-letter code: Glycine-rich RNA-binding protein blt801 (161 aa).

An RRM domain is found at 6 to 84 (YRCFVGGLRW…RNITVNEAQS (79 aa)). The interval 72 to 161 (LDGRNITVNE…GGSGGGNWRE (90 aa)) is disordered. Ser87 is subject to Phosphoserine; by PKA. A compositionally biased stretch (gly residues) spans 89–161 (GGGGFGGGGG…GGSGGGNWRE (73 aa)).

In terms of biological role, binds single-stranded DNA and homoribopolymers of guanine, uracil and adenine, but not cytosine. Also binds RNA, with a preference for RNA containing a high proportion of adenine within an open loop structure. Possibly has a role in RNA transcription or processing during stress. The chain is Glycine-rich RNA-binding protein blt801 from Hordeum vulgare (Barley).